The primary structure comprises 100 residues: MTPWFLYLIRTADNKLYTGITTDVERRYQQHQSGKGAKALRGKGELTLAFSAPVGDRSLALRAEYRVKQLTKRQKERLVAEGAGFAELLSSLQTPEIKSD.

The 76-residue stretch at 2-77 (TPWFLYLIRT…KQLTKRQKER (76 aa)) folds into the GIY-YIG domain.

It belongs to the UPF0213 family.

The polypeptide is UPF0213 protein YhbQ (Escherichia coli O81 (strain ED1a)).